A 105-amino-acid polypeptide reads, in one-letter code: Large ribosomal subunit protein uL24 (105 aa).

The protein belongs to the universal ribosomal protein uL24 family. Part of the 50S ribosomal subunit.

Its function is as follows. One of two assembly initiator proteins, it binds directly to the 5'-end of the 23S rRNA, where it nucleates assembly of the 50S subunit. In terms of biological role, one of the proteins that surrounds the polypeptide exit tunnel on the outside of the subunit. In Chromohalobacter salexigens (strain ATCC BAA-138 / DSM 3043 / CIP 106854 / NCIMB 13768 / 1H11), this protein is Large ribosomal subunit protein uL24.